The following is a 302-amino-acid chain: Segregation and condensation protein A (302 aa).

Belongs to the ScpA family. Component of a cohesin-like complex composed of ScpA, ScpB and the Smc homodimer, in which ScpA and ScpB bind to the head domain of Smc. The presence of the three proteins is required for the association of the complex with DNA.

It localises to the cytoplasm. In terms of biological role, participates in chromosomal partition during cell division. May act via the formation of a condensin-like complex containing Smc and ScpB that pull DNA away from mid-cell into both cell halves. The chain is Segregation and condensation protein A from Xylella fastidiosa (strain 9a5c).